The chain runs to 781 residues: Toll-like receptor 2 type-2 (781 aa).

Positions 1 to 24 (MHTWKMWAICTALAAHLPEEQALR) are cleaved as a signal peptide. Topologically, residues 25-585 (QACLSCDATQ…QLSLMECHRS (561 aa)) are extracellular. Residues Cys30 and Cys36 are joined by a disulfide bond. Asn37 carries N-linked (GlcNAc...) asparagine glycosylation. LRR repeat units follow at residues 53-74 (KITV…DLQK), 77-98 (NLRT…SFGS), 101-122 (KLEL…WFGP), 125-146 (SLQH…SPFS), 150-171 (NLSS…NFEG), and 174-195 (FLNT…SLKS). Residue Asn109 is glycosylated (N-linked (GlcNAc...) asparagine). N-linked (GlcNAc...) asparagine glycosylation is found at Asn150, Asn184, Asn301, and Asn313. Cys350 and Cys379 are joined by a disulfide. 7 LRR repeats span residues 358–378 (SLEY…EHSA), 385–406 (SLQT…GKSL), 411–432 (NLNL…CEWP), 434–455 (NLKY…IPST), 456–474 (LEVL…LQLP), 475–496 (FLKE…TDIP), and 497–518 (NLVA…EFES). N-linked (GlcNAc...) asparagine glycosylation is present at Asn390. Cys429 and Cys451 form a disulfide bridge. N-linked (GlcNAc...) asparagine glycosylation is present at Asn439. Positions 530 to 584 (NNFICSCEFLSFIHHEAGIAQVLVGWPESYICDSPLTVRGAQVGSVQLSLMECHR) constitute an LRRCT domain. A helical transmembrane segment spans residues 586 to 606 (LLVSLICTLVFLFILILVVVG). Over 607–781 (YKYHAVWYMR…WENLKAALKS (175 aa)) the chain is Cytoplasmic. Residues 636–779 (ICYDAFVSYS…MFWENLKAAL (144 aa)) enclose the TIR domain.

It belongs to the Toll-like receptor family. Binds MYD88 (via TIR domain). Post-translationally, N-glycosylated. Highly expressed in ovary. Also detected in brain, heart, lung, liver, spleen and kidney, and at low levels in gizzard, muscle, testis and proventriculus.

It localises to the membrane. Participates in the innate immune response to microbial agents. Acts via MYD88 and TRAF6, leading to NF-kappa-B activation, cytokine secretion and the inflammatory response. Mediates the response to mycoplasmal macrophage-activating lipopeptide-2kD (MALP-2). In Gallus gallus (Chicken), this protein is Toll-like receptor 2 type-2 (TLR2-2).